The following is a 136-amino-acid chain: Histone H3.3 (136 aa).

The tract at residues 1–42 (MARTKQTARKSTGGKAPRKQLASKAARKSAPVSGGVKKPHRY) is disordered. K5 carries the N6,N6,N6-trimethyllysine; alternate modification. At K5 the chain carries N6,N6-dimethyllysine; alternate. Residues K5 and K10 each carry the N6-methyllysine; alternate modification. K10 is modified (N6-acetyllysine; alternate). Position 11 is a phosphoserine (S11). Residue K15 is modified to N6,N6-dimethyllysine; alternate. N6-acetyllysine; alternate occurs at positions 15, 19, 24, 28, and 37. N6-methyllysine; alternate occurs at positions 19, 24, 28, and 37. N6,N6,N6-trimethyllysine; alternate occurs at positions 28 and 37. N6,N6-dimethyllysine; alternate occurs at positions 28 and 37. N6-acetyllysine occurs at positions 57 and 65. K80 carries the post-translational modification N6,N6,N6-trimethyllysine; alternate. An N6,N6-dimethyllysine; alternate modification is found at K80. K80 carries the N6-methyllysine; alternate modification.

Belongs to the histone H3 family. In terms of assembly, the nucleosome is a histone octamer containing two molecules each of H2A, H2B, H3 and H4 assembled in one H3-H4 heterotetramer and two H2A-H2B heterodimers. The octamer wraps approximately 147 bp of DNA. Post-translationally, phosphorylated to form H3S10ph. H3S10ph promotes subsequent H3K14ac formation and is required for transcriptional activation through TBP recruitment to the promoters. In terms of processing, mono-, di- and trimethylated by the COMPASS complex to form H3K4me1/2/3. H3K4me activates gene expression by regulating transcription elongation and plays a role in telomere length maintenance. H3K4me enrichment correlates with transcription levels, and occurs in a 5' to 3' gradient with H3K4me3 enrichment at the 5'-end of genes, shifting to H3K4me2 and then H3K4me1. Methylated by SET2 to form H3K36me. H3K36me represses gene expression. Methylated by DOT1 to form H3K79me. H3K79me is required for association of SIR proteins with telomeric regions and for telomeric silencing. The COMPASS-mediated formation of H3K4me2/3 and the DOT1-mediated formation of H3K79me require H2BK123ub1. Acetylation of histone H3 leads to transcriptional activation. H3K14ac formation by GCN5 is promoted by H3S10ph. H3K14ac can also be formed by ESA1. H3K56ac formation occurs predominantly in newly synthesized H3 molecules during G1, S and G2/M of the cell cycle and may be involved in DNA repair.

The protein resides in the nucleus. Its subcellular location is the chromosome. Functionally, core component of nucleosome. Nucleosomes wrap and compact DNA into chromatin, limiting DNA accessibility to the cellular machineries which require DNA as a template. Histones thereby play a central role in transcription regulation, DNA repair, DNA replication and chromosomal stability. DNA accessibility is regulated via a complex set of post-translational modifications of histones, also called histone code, and nucleosome remodeling. In Lodderomyces elongisporus (strain ATCC 11503 / CBS 2605 / JCM 1781 / NBRC 1676 / NRRL YB-4239) (Yeast), this protein is Histone H3.3 (HHT3).